We begin with the raw amino-acid sequence, 496 residues long: Galactokinase (496 aa).

Ala2 carries the N-acetylalanine modification. Residues Arg56, Glu62, His63, and Asp65 each contribute to the alpha-D-galactose site. ATP-binding residues include Gly161, Gly163, Ser165, and Ser166. Asp210 provides a ligand contact to alpha-D-galactose. Residue Asp210 is the Proton acceptor of the active site. Positions 252, 253, and 254 each coordinate ATP. Tyr262 contacts alpha-D-galactose.

This sequence belongs to the GHMP kinase family. GalK subfamily. It depends on Mg(2+) as a cofactor. Requires Mn(2+) as cofactor. Ca(2+) is required as a cofactor. Expressed in roots, stems, leaves, flowers and young siliques. Higher expression in the elongating middle stem region than in the lower or upper stem region.

It catalyses the reaction alpha-D-galactose + ATP = alpha-D-galactose 1-phosphate + ADP + H(+). It participates in carbohydrate metabolism; galactose metabolism. Functionally, sugar-1-kinase with a very high substrate specificity for the alpha-anomeric configuration of D-galacose (D-Gal). Also efficiently converts 2-deoxy-D-Gal to 2-deoxy-D-al-1-phosphate. The chain is Galactokinase (GAL1) from Arabidopsis thaliana (Mouse-ear cress).